Reading from the N-terminus, the 341-residue chain is tRNA N6-adenosine threonylcarbamoyltransferase (341 aa).

2 residues coordinate Fe cation: His-111 and His-115. Residues 134–138 (LVSGG), Asp-167, Gly-180, and Asn-276 contribute to the substrate site. Asp-304 is a binding site for Fe cation.

The protein belongs to the KAE1 / TsaD family. It depends on Fe(2+) as a cofactor.

It localises to the cytoplasm. The enzyme catalyses L-threonylcarbamoyladenylate + adenosine(37) in tRNA = N(6)-L-threonylcarbamoyladenosine(37) in tRNA + AMP + H(+). In terms of biological role, required for the formation of a threonylcarbamoyl group on adenosine at position 37 (t(6)A37) in tRNAs that read codons beginning with adenine. Is involved in the transfer of the threonylcarbamoyl moiety of threonylcarbamoyl-AMP (TC-AMP) to the N6 group of A37, together with TsaE and TsaB. TsaD likely plays a direct catalytic role in this reaction. The polypeptide is tRNA N6-adenosine threonylcarbamoyltransferase (Pseudomonas syringae pv. tomato (strain ATCC BAA-871 / DC3000)).